The chain runs to 201 residues: DNA polymerase epsilon subunit C (201 aa).

2 disordered regions span residues 102 to 165 (KKRE…KSTR) and 178 to 201 (SALDVGEHSDSSDIEVDHTKSTDP). The span at 117–144 (VVIEEPELHEDDGVEEEEEEDEVSEEEE) shows a compositional bias: acidic residues. Composition is skewed to basic and acidic residues over residues 145–164 (PVHNEELLDDSKDQQNDKST) and 182–201 (VGEHSDSSDIEVDHTKSTDP). Phosphoserine is present on residues serine 186, serine 188, and serine 189.

As to quaternary structure, DNA polymerase epsilon is a heterotetramer consisting of POL2, DPB2, DPB3 and DPB4.

It is found in the nucleus. Functionally, as accessory component of the DNA polymerase epsilon (DNA polymerase II) participates in chromosomal DNA replication. It is required during synthesis of the leading and lagging DNA strands at the replication fork and binds at/or near replication origins and moves along DNA with the replication fork. It has 3'-5' proofreading exonuclease activity that correct errors arising during DNA replication. It is also involved in DNA synthesis during DNA repair. This Saccharomyces cerevisiae (strain ATCC 204508 / S288c) (Baker's yeast) protein is DNA polymerase epsilon subunit C (DPB3).